The chain runs to 1710 residues: Neurexin-2 (1710 aa).

An N-terminal signal peptide occupies residues 1–28; that stretch reads MALGSRWQPPPQLPPLLLLLALAAGVRG. The Laminin G-like 1 domain occupies 29-206; that stretch reads LEFGGGPGQW…LRGAAADPLC (178 aa). The Extracellular portion of the chain corresponds to 29–1634; the sequence is LEFGGGPGQW…EVIRESSSTT (1606 aa). A glycan (N-linked (GlcNAc...) asparagine) is linked at asparagine 60. The EGF-like 1 domain occupies 202–242; sequence ADPLCAPARNPCANGGLCTVLAPGEVGCDCSHTGFGGKFCS. 3 cysteine pairs are disulfide-bonded: cysteine 206–cysteine 219, cysteine 213–cysteine 229, and cysteine 231–cysteine 241. 2 Laminin G-like domains span residues 289–486 and 493–686; these read VATF…SFRC and DPVT…APFC. Aspartate 335 contributes to the Ca(2+) binding site. An N-linked (GlcNAc...) asparagine glycan is attached at asparagine 338. Residues leucine 352 and methionine 420 each contribute to the Ca(2+) site. Cystine bridges form between cysteine 450-cysteine 486, cysteine 657-cysteine 686, cysteine 694-cysteine 705, cysteine 699-cysteine 714, and cysteine 716-cysteine 726. Positions 690–727 constitute an EGF-like 2 domain; sequence TLKQCASAPCRNGGICREGWNRFVCDCIGTGFLGRVCE. Laminin G-like domains follow at residues 732-904 and 918-1093; these read VLSY…ITYC and DPVT…ERGC. Ca(2+)-binding residues include aspartate 779 and leucine 796. N-linked (GlcNAc...) asparagine glycosylation occurs at asparagine 841. Position 854 (arginine 854) interacts with Ca(2+). 4 disulfides stabilise this stretch: cysteine 1065-cysteine 1093, cysteine 1100-cysteine 1111, cysteine 1105-cysteine 1120, and cysteine 1122-cysteine 1132. The 38-residue stretch at 1096-1133 folds into the EGF-like 3 domain; it reads PSTTCTEESCANQGVCLQQWDGFTCDCTMTSYGGPVCN. Residues 1137–1345 form the Laminin G-like 6 domain; that stretch reads TTYIFGKGGA…HLRLVGEGPS (209 aa). Ca(2+) contacts are provided by aspartate 1189, valine 1206, isoleucine 1288, and asparagine 1290. Serine 1400 carries O-linked (Xyl...) (heparan sulfate) serine glycosylation. Disordered stretches follow at residues 1458–1508 and 1587–1621; these read ATQD…LPPT and EPRR…RGPP. A helical transmembrane segment spans residues 1635 to 1655; that stretch reads GMVVGIVAAAALCILILLYAM. Over 1656-1710 the chain is Cytoplasmic; it reads YKYRNRDEGSYQVDQSRNYISNSAQSNGAVVKEKAPAAPKTPSKAKKNKDKEYYV. The tract at residues 1677 to 1710 is disordered; that stretch reads NSAQSNGAVVKEKAPAAPKTPSKAKKNKDKEYYV.

The laminin G-like domain 1 binds to NXPH1. Interacts with PATJ. Interacts with CBLN1, CBLN2 and, less avidly, with CBLN4. Specific isoforms bind neuroligins NLGN1, NLGN2 and NLGN3. Specific isoforms bind to alpha-dystroglycan. Interacts (via Laminin G-like 1 domain) with IGSF21 (Ig-like 1 domain) in a trans-interaction manner. Interacts with CLSTN3. Post-translationally, O-glycosylated; contains heparan sulfate. Heparan sulfate attachment is required for synapse development by mediating interactions with neuroligins.

The protein resides in the presynaptic cell membrane. Neuronal cell surface protein that may be involved in cell recognition and cell adhesion. May mediate intracellular signaling. The sequence is that of Neurexin-2 from Mus musculus (Mouse).